Here is a 132-residue protein sequence, read N- to C-terminus: Global transcriptional regulator Spx (132 aa).

The cysteines at positions 10 and 13 are disulfide-linked.

This sequence belongs to the ArsC family. Spx subfamily. Interacts with the C-terminal domain of the alpha subunit of the RNAP.

It localises to the cytoplasm. Functionally, global transcriptional regulator that plays a key role in stress response and exerts either positive or negative regulation of genes. Acts by interacting with the C-terminal domain of the alpha subunit of the RNA polymerase (RNAP). This interaction can enhance binding of RNAP to the promoter region of target genes and stimulate their transcription, or block interaction of RNAP with activator. The chain is Global transcriptional regulator Spx from Enterococcus faecalis (strain ATCC 700802 / V583).